Reading from the N-terminus, the 607-residue chain is Glutamine--fructose-6-phosphate aminotransferase [isomerizing] (607 aa).

Catalysis depends on cysteine 2, which acts as the Nucleophile; for GATase activity. Positions cysteine 2–asparagine 217 constitute a Glutamine amidotransferase type-2 domain. SIS domains follow at residues isoleucine 283 to alanine 422 and valine 455 to proline 597. Residue lysine 602 is the For Fru-6P isomerization activity of the active site.

In terms of assembly, homodimer.

It localises to the cytoplasm. It catalyses the reaction D-fructose 6-phosphate + L-glutamine = D-glucosamine 6-phosphate + L-glutamate. Catalyzes the first step in hexosamine metabolism, converting fructose-6P into glucosamine-6P using glutamine as a nitrogen source. This Brucella abortus biovar 1 (strain 9-941) protein is Glutamine--fructose-6-phosphate aminotransferase [isomerizing].